Consider the following 139-residue polypeptide: Large-conductance mechanosensitive channel (139 aa).

Transmembrane regions (helical) follow at residues 14 to 34 (VIDL…INSL) and 81 to 101 (GSFL…FMIV).

The protein belongs to the MscL family. As to quaternary structure, homopentamer.

The protein resides in the cell membrane. Its function is as follows. Channel that opens in response to stretch forces in the membrane lipid bilayer. May participate in the regulation of osmotic pressure changes within the cell. The sequence is that of Large-conductance mechanosensitive channel from Chloroflexus aurantiacus (strain ATCC 29366 / DSM 635 / J-10-fl).